The primary structure comprises 308 residues: Tyrosine recombinase XerD (308 aa).

Residues 3–89 (NGFTRLTEQF…SIHEFHRFAL (87 aa)) form the Core-binding (CB) domain. In terms of domain architecture, Tyr recombinase spans 110–301 (TLPDVLTVDE…SPETLIETYL (192 aa)). Residues R153, K177, H253, R256, and H279 contribute to the active site. The active-site O-(3'-phospho-DNA)-tyrosine intermediate is the Y288.

It belongs to the 'phage' integrase family. XerD subfamily. As to quaternary structure, forms a cyclic heterotetrameric complex composed of two molecules of XerC and two molecules of XerD.

The protein localises to the cytoplasm. Functionally, site-specific tyrosine recombinase, which acts by catalyzing the cutting and rejoining of the recombining DNA molecules. The XerC-XerD complex is essential to convert dimers of the bacterial chromosome into monomers to permit their segregation at cell division. It also contributes to the segregational stability of plasmids. This is Tyrosine recombinase XerD from Bifidobacterium longum (strain NCC 2705).